The sequence spans 670 residues: DNA ligase (670 aa).

NAD(+)-binding positions include 32-36 (DSEYD), 81-82 (SL), and Glu114. Lys116 functions as the N6-AMP-lysine intermediate in the catalytic mechanism. NAD(+) is bound by residues Arg137, Glu174, Lys291, and Lys315. Positions 409, 412, 427, and 433 each coordinate Zn(2+). In terms of domain architecture, BRCT spans 592–670 (ASENLFKDKT…EEEFLAQITR (79 aa)).

The protein belongs to the NAD-dependent DNA ligase family. LigA subfamily. It depends on Mg(2+) as a cofactor. Mn(2+) serves as cofactor.

It catalyses the reaction NAD(+) + (deoxyribonucleotide)n-3'-hydroxyl + 5'-phospho-(deoxyribonucleotide)m = (deoxyribonucleotide)n+m + AMP + beta-nicotinamide D-nucleotide.. Its function is as follows. DNA ligase that catalyzes the formation of phosphodiester linkages between 5'-phosphoryl and 3'-hydroxyl groups in double-stranded DNA using NAD as a coenzyme and as the energy source for the reaction. It is essential for DNA replication and repair of damaged DNA. The chain is DNA ligase from Haemophilus influenzae (strain PittEE).